Here is a 566-residue protein sequence, read N- to C-terminus: Proline--tRNA ligase (566 aa).

Belongs to the class-II aminoacyl-tRNA synthetase family. ProS type 1 subfamily. As to quaternary structure, homodimer.

The protein resides in the cytoplasm. It catalyses the reaction tRNA(Pro) + L-proline + ATP = L-prolyl-tRNA(Pro) + AMP + diphosphate. Its function is as follows. Catalyzes the attachment of proline to tRNA(Pro) in a two-step reaction: proline is first activated by ATP to form Pro-AMP and then transferred to the acceptor end of tRNA(Pro). As ProRS can inadvertently accommodate and process non-cognate amino acids such as alanine and cysteine, to avoid such errors it has two additional distinct editing activities against alanine. One activity is designated as 'pretransfer' editing and involves the tRNA(Pro)-independent hydrolysis of activated Ala-AMP. The other activity is designated 'posttransfer' editing and involves deacylation of mischarged Ala-tRNA(Pro). The misacylated Cys-tRNA(Pro) is not edited by ProRS. The polypeptide is Proline--tRNA ligase (Staphylococcus saprophyticus subsp. saprophyticus (strain ATCC 15305 / DSM 20229 / NCIMB 8711 / NCTC 7292 / S-41)).